Consider the following 420-residue polypeptide: Fasciclin-like arabinogalactan protein 4 (420 aa).

The first 28 residues, 1–28 (MANVISISHFTLLALPYLLLLLSSTAAA), serve as a signal peptide directing secretion. FAS1 domains follow at residues 29 to 177 (INVT…DSLI) and 205 to 351 (GINL…SKVL). 8 N-linked (GlcNAc...) asparagine glycosylation sites follow: Asn-30, Asn-40, Asn-135, Asn-154, Asn-167, Asn-207, Asn-312, and Asn-317. The segment at 360-388 (SGQPVATAPPQEISLSPESSSEQPSRLVS) is disordered. A compositionally biased stretch (low complexity) spans 368–384 (PPQEISLSPESSSEQPS). Ser-396 carries GPI-anchor amidated serine lipidation. A propeptide spans 397-420 (GAVKRPLGFLVLWCWCIAFCYVLV) (removed in mature form).

This sequence belongs to the fasciclin-like AGP family. Expressed in all plant organs and tissues, including guard cells in the leaf.

The protein localises to the cell membrane. Its function is as follows. May be a cell surface adhesion protein that is required for normal cell expansion. The chain is Fasciclin-like arabinogalactan protein 4 (FLA4) from Arabidopsis thaliana (Mouse-ear cress).